A 206-amino-acid chain; its full sequence is MARYLGPKLKLSRREGTDLFLKSGVRAIDTKCKIDNAPGVHGARRGRLSEYGVQLREKQKVRRMYGVLEKQFRNYYAEAARLKGNTGENLLQLLEGRLDNVVYRMGFGATRAEARQLVSHKAILVNGKVVNVPSFKVAANDVVSIREKAKQQTRIKAALEVAEQREKPTWIEVDAGKMEGTFKRMPERSDLSADINEQLIVELYSK.

The S4 RNA-binding domain maps to 96–158 (GRLDNVVYRM…AKQQTRIKAA (63 aa)).

It belongs to the universal ribosomal protein uS4 family. Part of the 30S ribosomal subunit. Contacts protein S5. The interaction surface between S4 and S5 is involved in control of translational fidelity.

One of the primary rRNA binding proteins, it binds directly to 16S rRNA where it nucleates assembly of the body of the 30S subunit. In terms of biological role, with S5 and S12 plays an important role in translational accuracy. In Vibrio vulnificus (strain CMCP6), this protein is Small ribosomal subunit protein uS4.